The primary structure comprises 227 residues: Phosphoglycolate phosphatase (227 aa).

Catalysis depends on aspartate 8, which acts as the Nucleophile. Residues aspartate 8 and aspartate 10 each contribute to the Mg(2+) site. Lysine 152 provides a ligand contact to substrate. Mg(2+) is bound by residues aspartate 175 and aspartate 179.

It belongs to the archaeal SPP-like hydrolase family. Requires Mg(2+) as cofactor.

It carries out the reaction 2-phosphoglycolate + H2O = glycolate + phosphate. In terms of biological role, catalyzes the dephosphorylation of 2-phosphoglycolate. This chain is Phosphoglycolate phosphatase, found in Halorubrum lacusprofundi (strain ATCC 49239 / DSM 5036 / JCM 8891 / ACAM 34).